The following is a 240-amino-acid chain: uncharacterized protein (240 aa).

In terms of domain architecture, ABC transporter spans 2–223; it reads VRIQDLSLAF…GNAPRELHQA (222 aa). ATP is bound at residue 34–41; sequence GSSGVGKS.

The protein belongs to the ABC transporter superfamily.

This is an uncharacterized protein from Haemophilus influenzae (strain ATCC 51907 / DSM 11121 / KW20 / Rd).